The following is a 158-amino-acid chain: Nuclear cap-binding protein subunit 2 (158 aa).

MRNA contacts are provided by residues Tyr-17, Tyr-40, 109–113 (RADWD), 120–124 (RQYGR), and 130–131 (QV). The RRM domain occupies 37–115 (CTLYVGNLSY…RVIRADWDAG (79 aa)). A disordered region spans residues 123-158 (GRGKHGGQVRDEYRKDYDPERGGYNRAIAQKGGDRQ). Basic and acidic residues predominate over residues 130-145 (QVRDEYRKDYDPERGG).

The protein belongs to the RRM NCBP2 family. As to quaternary structure, component of the nuclear cap-binding complex (CBC), a heterodimer composed of ncbp-1 and ncbp-2 that interacts with m7GpppG-capped RNA.

The protein resides in the nucleus. Component of the cap-binding complex (CBC), which binds co-transcriptionally to the 5' cap of pre-mRNAs and is involved in various processes such as pre-mRNA splicing and RNA-mediated gene silencing (RNAi). The CBC complex is involved in miRNA-mediated RNA interference and is required for primary microRNAs (miRNAs) processing. In the CBC complex, ncbp-2 recognizes and binds capped RNAs (m7GpppG-capped RNA) but requires ncbp-1 to stabilize the movement of its N-terminal loop and lock the CBC into a high affinity cap-binding state with the cap structure. In Caenorhabditis elegans, this protein is Nuclear cap-binding protein subunit 2 (ncbp-2).